A 307-amino-acid chain; its full sequence is Dihydroorotate dehydrogenase B (NAD(+)), catalytic subunit (307 aa).

FMN-binding positions include Ser-22 and 46 to 47 (KG). Residues Lys-46 and 70 to 74 (NAVGL) each bind substrate. FMN contacts are provided by Asn-100 and Asn-128. Asn-128 serves as a coordination point for substrate. The active-site Nucleophile is Cys-131. FMN-binding residues include Lys-166 and Val-192. 193–194 (NT) is a substrate binding site. Residues Gly-218 and 244 to 245 (GG) each bind FMN.

Belongs to the dihydroorotate dehydrogenase family. Type 1 subfamily. As to quaternary structure, heterotetramer of 2 PyrK and 2 PyrD type B subunits. FMN serves as cofactor.

It localises to the cytoplasm. It catalyses the reaction (S)-dihydroorotate + NAD(+) = orotate + NADH + H(+). Its pathway is pyrimidine metabolism; UMP biosynthesis via de novo pathway; orotate from (S)-dihydroorotate (NAD(+) route): step 1/1. Its function is as follows. Catalyzes the conversion of dihydroorotate to orotate with NAD(+) as electron acceptor. The protein is Dihydroorotate dehydrogenase B (NAD(+)), catalytic subunit (pyrD) of Porphyromonas gingivalis (strain ATCC BAA-308 / W83).